Consider the following 329-residue polypeptide: ATP phosphoribosyltransferase regulatory subunit (329 aa).

The protein belongs to the class-II aminoacyl-tRNA synthetase family. HisZ subfamily. Heteromultimer composed of HisG and HisZ subunits.

The protein localises to the cytoplasm. Its pathway is amino-acid biosynthesis; L-histidine biosynthesis; L-histidine from 5-phospho-alpha-D-ribose 1-diphosphate: step 1/9. Functionally, required for the first step of histidine biosynthesis. May allow the feedback regulation of ATP phosphoribosyltransferase activity by histidine. The protein is ATP phosphoribosyltransferase regulatory subunit of Streptococcus gordonii (strain Challis / ATCC 35105 / BCRC 15272 / CH1 / DL1 / V288).